The following is a 100-amino-acid chain: MPPIMLNRFTLRNFYLNLSLCKYVSTFKILFPKKRKLFQTSSNLSLCYSDIRRTSLSSKSASLELTTSSSSVLSPSSKYVFSFNSLKNGVFSKSSAELRF.

This is an uncharacterized protein from Saccharomyces cerevisiae (strain ATCC 204508 / S288c) (Baker's yeast).